The primary structure comprises 401 residues: Large ribosomal subunit protein uL4 (401 aa).

It belongs to the universal ribosomal protein uL4 family.

The polypeptide is Large ribosomal subunit protein uL4 (RpL4) (Drosophila melanogaster (Fruit fly)).